The primary structure comprises 212 residues: Thymidylate kinase (212 aa).

Residues Arg16–Thr21, Arg97, Arg182, and Lys192 each bind ATP.

This sequence belongs to the thymidylate kinase family. Mg(2+) serves as cofactor.

It carries out the reaction dTMP + ATP = dTDP + ADP. Its pathway is pyrimidine metabolism; dTTP biosynthesis. Its function is as follows. Catalyzes the phosphorylation of thymidine monophosphate (dTMP) to thymidine diphosphate (dTDP), the immediate precursor for the DNA building block dTTP, with ATP as the preferred phosphoryl donor in the presence of Mg(2+). The polypeptide is Thymidylate kinase (dtymk) (Danio rerio (Zebrafish)).